The chain runs to 919 residues: Probable dipeptidyl-aminopeptidase B (919 aa).

Positions 1-89 (MGANSRVNDD…DGYVPSGGKP (89 aa)) are disordered. Residues 1 to 95 (MGANSRVNDD…GGKPAQRRTR (95 aa)) lie on the Cytoplasmic side of the membrane. The span at 27 to 38 (DSSSTASISLTL) shows a compositional bias: low complexity. Over residues 44-55 (HTATEPSKSTNG) the composition is skewed to polar residues. A helical; Signal-anchor for type II membrane protein membrane pass occupies residues 96 to 116 (IVFWLLVALCVGGWAMAFIIM). The Vacuolar portion of the chain corresponds to 117–919 (ATSPNNRHST…RVIRRLLHFG (803 aa)). The disordered stretch occupies residues 121-150 (NNRHSTSDSSSGGSESEIVKPNTPHDGKKI). Over residues 127 to 136 (SDSSSGGSES) the composition is skewed to low complexity. Asn-207, Asn-303, Asn-355, Asn-577, and Asn-665 each carry an N-linked (GlcNAc...) asparagine glycan. The active-site Charge relay system is the Ser-760. Asn-814 and Asn-819 each carry an N-linked (GlcNAc...) asparagine glycan. Active-site charge relay system residues include Asp-837 and His-870.

It belongs to the peptidase S9B family.

The protein resides in the vacuole membrane. The enzyme catalyses Release of an N-terminal dipeptide, Xaa-Yaa-|-Zaa-, from a polypeptide, preferentially when Yaa is Pro, provided Zaa is neither Pro nor hydroxyproline.. Its function is as follows. Type IV dipeptidyl-peptidase which removes N-terminal dipeptides sequentially from polypeptides having unsubstituted N-termini provided that the penultimate residue is proline. This chain is Probable dipeptidyl-aminopeptidase B (DAPB), found in Arthroderma otae (strain ATCC MYA-4605 / CBS 113480) (Microsporum canis).